The sequence spans 321 residues: Anthranilate phosphoribosyltransferase (321 aa).

Residues Gly72, 75–76 (GD), Thr80, 82–85 (NVST), 99–107 (KHGNVSITS), and Ser111 each bind 5-phospho-alpha-D-ribose 1-diphosphate. Gly72 serves as a coordination point for anthranilate. Ser84 is a binding site for Mg(2+). Anthranilate is bound at residue Asn102. Arg157 provides a ligand contact to anthranilate. 2 residues coordinate Mg(2+): Asp216 and Glu217.

This sequence belongs to the anthranilate phosphoribosyltransferase family. As to quaternary structure, homodimer. Mg(2+) is required as a cofactor.

The catalysed reaction is N-(5-phospho-beta-D-ribosyl)anthranilate + diphosphate = 5-phospho-alpha-D-ribose 1-diphosphate + anthranilate. Its pathway is amino-acid biosynthesis; L-tryptophan biosynthesis; L-tryptophan from chorismate: step 2/5. Catalyzes the transfer of the phosphoribosyl group of 5-phosphorylribose-1-pyrophosphate (PRPP) to anthranilate to yield N-(5'-phosphoribosyl)-anthranilate (PRA). The polypeptide is Anthranilate phosphoribosyltransferase (Methanococcus maripaludis (strain DSM 14266 / JCM 13030 / NBRC 101832 / S2 / LL)).